A 106-amino-acid polypeptide reads, in one-letter code: Replication protein A 14 kDa subunit B (106 aa).

N-acetylmethionine is present on Met1.

Belongs to the replication factor A protein 3 family. In terms of assembly, component of the heterotrimeric canonical replication protein A complex (RPA).

It is found in the nucleus. In terms of biological role, as part of the replication protein A (RPA/RP-A), a single-stranded DNA-binding heterotrimeric complex, may play an essential role in DNA replication, recombination and repair. Binds and stabilizes single-stranded DNA intermediates, preventing complementary DNA reannealing and recruiting different proteins involved in DNA metabolism. This is Replication protein A 14 kDa subunit B (RPA3B) from Arabidopsis thaliana (Mouse-ear cress).